A 547-amino-acid polypeptide reads, in one-letter code: Chaperonin GroEL (547 aa).

ATP-binding positions include 30–33 (TLGP), Lys-51, 87–91 (DGTTT), Gly-415, and Asp-495.

It belongs to the chaperonin (HSP60) family. Forms a cylinder of 14 subunits composed of two heptameric rings stacked back-to-back. Interacts with the co-chaperonin GroES.

Its subcellular location is the cytoplasm. It carries out the reaction ATP + H2O + a folded polypeptide = ADP + phosphate + an unfolded polypeptide.. Its function is as follows. Together with its co-chaperonin GroES, plays an essential role in assisting protein folding. The GroEL-GroES system forms a nano-cage that allows encapsulation of the non-native substrate proteins and provides a physical environment optimized to promote and accelerate protein folding. The chain is Chaperonin GroEL from Thiobacillus denitrificans (strain ATCC 25259 / T1).